The following is a 698-amino-acid chain: Superoxide-generating NADPH oxidase heavy chain subunit B (698 aa).

Disordered stretches follow at residues 1–68 and 134–158; these read MNEK…NITP and NDQV…NNKN. The Cytoplasmic portion of the chain corresponds to 1–184; sequence MNEKKELQQE…KIRGWWWHRG (184 aa). Composition is skewed to polar residues over residues 16–25 and 33–53; these read FQTPKNQQLE and EISS…PISQ. Low complexity-rich tracts occupy residues 54 to 65 and 138 to 156; these read NDNSNNENESLN and NSNT…TNNN. The chain crosses the membrane as a helical span at residues 185–205; sequence ISTYIMLFYIALNIGVGVHMF. At 206-229 the chain is on the extracellular side; that stretch reads YNMYHSDIFKFLGLSFCFSRTAAR. The Ferric oxidoreductase domain maps to 225–375; the sequence is RTAARLINLN…LFIPFYILLC (151 aa). A helical transmembrane segment spans residues 230–250; sequence LINLNSAVILLPVLRNFLSWL. Topologically, residues 251-269 are cytoplasmic; that stretch reads RGTIVNNYIPIDKHLNFHK. Heme contacts are provided by histidine 268 and histidine 282. A helical transmembrane segment spans residues 270 to 290; it reads LCAFMLFCCTIIHCVGHYISF. Topologically, residues 291–324 are extracellular; it reads KKINDDVLKIDDGKSVAGDYLNININNFPDEKYL. A helical transmembrane segment spans residues 325 to 345; the sequence is FFKSVPGITGHIMLLILILIV. The Cytoplasmic segment spans residues 346-355; the sequence is SSSMWRIRRP. The chain crosses the membrane as a helical span at residues 356 to 376; it reads MFEIFWYVHHLFIPFYILLCF. Residues histidine 364 and histidine 377 each coordinate heme. Over 377-388 the chain is Extracellular; sequence HGYSKILKKDPQ. Residues 389 to 409 traverse the membrane as a helical segment; sequence SWMWIIAPFILYSIERLIRIA. Residues 404–528 enclose the FAD-binding FR-type domain; that stretch reads RLIRIARSKK…DGPFGAPAEN (125 aa). Residues 410-698 lie on the Cytoplasmic side of the membrane; sequence RSKKRVILEK…CHLIFHKENF (289 aa). Residue 460–466 coordinates FAD; that stretch reads HPFTITS.

In terms of assembly, composed of a heavy chain and a light chain. Requires FAD as cofactor.

It is found in the membrane. Its function is as follows. Critical component of the membrane-bound oxidase that generates superoxide. It is the terminal component of a respiratory chain that transfers single electrons from cytoplasmic NADPH across the plasma membrane to molecular oxygen on the exterior. This is Superoxide-generating NADPH oxidase heavy chain subunit B (noxB) from Dictyostelium discoideum (Social amoeba).